The chain runs to 301 residues: Sulfate adenylyltransferase subunit 2 (301 aa).

It belongs to the PAPS reductase family. CysD subfamily. Heterodimer composed of CysD, the smaller subunit, and CysN.

The catalysed reaction is sulfate + ATP + H(+) = adenosine 5'-phosphosulfate + diphosphate. Its pathway is sulfur metabolism; hydrogen sulfide biosynthesis; sulfite from sulfate: step 1/3. In terms of biological role, with CysN forms the ATP sulfurylase (ATPS) that catalyzes the adenylation of sulfate producing adenosine 5'-phosphosulfate (APS) and diphosphate, the first enzymatic step in sulfur assimilation pathway. APS synthesis involves the formation of a high-energy phosphoric-sulfuric acid anhydride bond driven by GTP hydrolysis by CysN coupled to ATP hydrolysis by CysD. This is Sulfate adenylyltransferase subunit 2 from Shewanella loihica (strain ATCC BAA-1088 / PV-4).